A 282-amino-acid chain; its full sequence is Probable endonuclease 4 (282 aa).

Positions 70, 110, 146, 180, 183, 217, 230, 232, and 262 each coordinate Zn(2+).

Belongs to the AP endonuclease 2 family. Zn(2+) is required as a cofactor.

The catalysed reaction is Endonucleolytic cleavage to 5'-phosphooligonucleotide end-products.. Its function is as follows. Endonuclease IV plays a role in DNA repair. It cleaves phosphodiester bonds at apurinic or apyrimidinic (AP) sites, generating a 3'-hydroxyl group and a 5'-terminal sugar phosphate. The protein is Probable endonuclease 4 of Wolinella succinogenes (strain ATCC 29543 / DSM 1740 / CCUG 13145 / JCM 31913 / LMG 7466 / NCTC 11488 / FDC 602W) (Vibrio succinogenes).